The chain runs to 2014 residues: Fatty acid synthase beta subunit pigK (2014 aa).

The acetyltransferase (AT) domain stretch occupies residues 144–515; sequence LAAVFGGQST…KDGQGVRVII (372 aa). The active-site For acetyltransferase activity is the Ser263. Residues 570-815 are enoyl reductase (ER) domain; the sequence is SRLLDTPPLM…LITEASGVSD (246 aa). The tract at residues 1126 to 1606 is dehydratase (DH) domain; the sequence is RSGSPWIHAL…LPGDRLLVNV (481 aa). In terms of domain architecture, MaoC-like spans 1514–1627; sequence PGWPGVSSLE…FNVSAFKQAT (114 aa). Positions 1645–2005 are malonyl/palmitoyl transferase (MT/PT) domain; the sequence is FFFTGQGSQK…VREVFNITQS (361 aa). Ser1790 functions as the For malonyltransferase activity in the catalytic mechanism.

Belongs to the fungal fatty acid synthetase subunit beta family. As to quaternary structure, [Alpha(6)beta(6)] hexamers of two multifunctional subunits (alpha and beta).

The enzyme catalyses acetyl-CoA + n malonyl-CoA + 2n NADPH + 4n H(+) = a long-chain-acyl-CoA + n CoA + n CO2 + 2n NADP(+).. It carries out the reaction holo-[ACP] + acetyl-CoA = acetyl-[ACP] + CoA. It catalyses the reaction holo-[ACP] + malonyl-CoA = malonyl-[ACP] + CoA. The catalysed reaction is a (3R)-hydroxyacyl-[ACP] = a (2E)-enoyl-[ACP] + H2O. The enzyme catalyses a 2,3-saturated acyl-[ACP] + NAD(+) = a (2E)-enoyl-[ACP] + NADH + H(+). It carries out the reaction (9Z)-octadecenoyl-[ACP] + H2O = (9Z)-octadecenoate + holo-[ACP] + H(+). The protein operates within secondary metabolite biosynthesis. In terms of biological role, fatty acid synthase subunit beta; part of the gene cluster that mediates the biosynthesis of azaphilone pigments (MonAzPs), a complex mixture of compounds with a common azaphilone skeleton very widely used as food colorants. PigJ and pigK form the two subunits of a dedicated fungal fatty acid synthase (FAS) that produces the side chain fatty acyl moiety of MonAzPs, a beta-keto fatty acid. The chain length control of the pigJ-pigK FAS is somewhat flexible as MonAzPs features either a beta-ketooctanoic or a beta-ketodecanoic acid moiety. The beta-ketoacyl-ACP probably serves as the substrate for the acetyltransferase pigD that directly transfers the fatty acyl chain to the C-4 alcohol of the pyran ring. The first step of the pathway is performed by the nrPKS pigA that forms the hexaketide precursor from successive condensations of five malonyl-CoA units, with a simple acetyl-CoA starter unit. The role of esterase pigG is not clear, but it may play at most a supplementary role in the formation of the benzaldehyde produced by the pigA nrPKS. This very reactive benzaldehyde is intercepted by the pigC ketoreductase that to provide the first stable enzyme-free MonAzPs intermediate, 6-(4-hydroxy-2-oxopentyl)-3-methyl-2,4-dioxocyclohexane carbaldehyde, also known as M7PKS-1. The FAD-dependent monooxygenase pigN hydroxylates M7PKS-1 at C-4, which triggers the formation of the pyran ring. PigJ, pigK and pigD are involved in the acetylation of the pyran ring. PigJ and pigK form the two subunits of a dedicated fungal FAS that produces the side chain fatty acyl moiety of MonAzPs and pigD transfers the fatty acyl chain to the C-4 alcohol. PigM and pigO are involved in the elimination of the omega-1 alcohol. PigM acts as an O-acetyltransferase that synthesizes the putative O-11 acetyl intermediate whereas pigO eliminates acetic acid to yield an intermediate with a C10(11) double bond. The dehydration of the C-11 alcohol followed by the reduction of the C6(7) double bond by the NAD(P)H-dependent oxidoreductase pigE increases the electrophilicity of the C-5 ketone of the resulting acyl benzopyran. This in turn sets up the C-5 ketone for an intramolecular Knoevenagel aldol condensation with the C-20 enol of the side chain. This condensation affords the characteristic linear tricyclic carbon skeletons of the yellow pigments that serve as the common precursors for the classical yellow pigments monascin and ankaflavin, orange pigments rubopunctatin and monascorubrin, and red pigments ribropunctamine and monascorubramine. The FAD-dependent oxidoreductase pigF is especially invoved in the biosynthesis of orange and red pigments via desaturation of C6(7). This is Fatty acid synthase beta subunit pigK from Monascus ruber (Mold).